Here is a 413-residue protein sequence, read N- to C-terminus: cAMP-dependent protein kinase regulatory subunit (413 aa).

Residues 1–145 are disordered; the sequence is MADSSSFPGT…DSWTPPCHPK (145 aa). The segment at 24–161 is dimerization and phosphorylation; sequence SPIQKISEEE…RLKTAVSNNF (138 aa). Residues 58-67 are compositionally biased toward low complexity; the sequence is GNSFNGDNGS. Polar residues predominate over residues 121-138; sequence TSVSAESLNPTSAGSDSW. At Ser-122 the chain carries Phosphoserine. Residues 162 to 291, Glu-240, Arg-249, 294 to 413, Glu-361, and Arg-370 contribute to the 3',5'-cyclic AMP site; these read LFSH…FLEE and LLSS…PSPS.

The protein belongs to the cAMP-dependent kinase regulatory chain family. As to quaternary structure, tetramer, composed of 2 regulatory (R) and 2 catalytic (C) subunits. In the presence of cAMP it dissociates into 2 active monomeric C subunits and an R dimer.

This Aspergillus fumigatus (strain ATCC MYA-4609 / CBS 101355 / FGSC A1100 / Af293) (Neosartorya fumigata) protein is cAMP-dependent protein kinase regulatory subunit (pkaR).